The sequence spans 251 residues: Flap endonuclease Xni (251 aa).

Mg(2+) is bound at residue D104. A 5'-3' exonuclease domain is found at 160–249 (VLPRQLPDYW…IDGNLQQLRL (90 aa)). L171, A172, P180, V182, and I185 together coordinate K(+). The interval 184-189 (GIGPKS) is interaction with DNA.

It belongs to the Xni family. It depends on Mg(2+) as a cofactor. K(+) is required as a cofactor.

In terms of biological role, has flap endonuclease activity. During DNA replication, flap endonucleases cleave the 5'-overhanging flap structure that is generated by displacement synthesis when DNA polymerase encounters the 5'-end of a downstream Okazaki fragment. This is Flap endonuclease Xni from Salmonella dublin (strain CT_02021853).